We begin with the raw amino-acid sequence, 852 residues long: G-type lectin S-receptor-like serine/threonine-protein kinase At4g03230 (852 aa).

The N-terminal stretch at 1-19 (MILSVFFYMFLLHIRRLDC) is a signal peptide. The Bulb-type lectin domain occupies 20-154 (FVAVQDSKTL…GNEANVVWQS (135 aa)). At 20 to 444 (FVAVQDSKTL…RGRGRYGEAK (425 aa)) the chain is on the extracellular side. Residues Asn-37, Asn-59, Asn-171, Asn-187, Asn-234, and Asn-243 are each glycosylated (N-linked (GlcNAc...) asparagine). In terms of domain architecture, EGF-like spans 285 to 321 (PRDECSVYNACGNFGSCNSKNEEMCKCLPGFRPNFLE). Disulfide bonds link Cys-289-Cys-301 and Cys-295-Cys-309. In terms of domain architecture, PAN spans 339–426 (CGKDGVVVGD…SRNVFIRVAV (88 aa)). Asn-352 is a glycosylation site (N-linked (GlcNAc...) asparagine). 2 disulfide bridges follow: Cys-373–Cys-400 and Cys-377–Cys-383. The chain crosses the membrane as a helical span at residues 445-465 (TPVVLIIVVTFTSAAILVVLS). Residues 466 to 852 (STASYVFLQR…ELTITLEDGR (387 aa)) lie on the Cytoplasmic side of the membrane. One can recognise a Protein kinase domain in the interval 532–819 (FSNANKLGQG…TLPTPKQPAF (288 aa)). ATP contacts are provided by residues 538–546 (LGQGGFGPV) and Lys-560. Ser-566 carries the post-translational modification Phosphoserine. Residues 621-638 (KLCQRLDWKMRCNIILGI) form a caM-binding region. Catalysis depends on Asp-657, which acts as the Proton acceptor. Ser-661 and Ser-674 each carry phosphoserine. Thr-691 is modified (phosphothreonine). The segment at 826–852 (SSSKASSSTKPETCSENELTITLEDGR) is disordered. Residues Ser-831 and Ser-840 each carry the phosphoserine modification. Over residues 834–845 (TKPETCSENELT) the composition is skewed to polar residues. Thr-847 carries the post-translational modification Phosphothreonine.

Belongs to the protein kinase superfamily. Ser/Thr protein kinase family.

The protein resides in the cell membrane. It carries out the reaction L-seryl-[protein] + ATP = O-phospho-L-seryl-[protein] + ADP + H(+). It catalyses the reaction L-threonyl-[protein] + ATP = O-phospho-L-threonyl-[protein] + ADP + H(+). The protein is G-type lectin S-receptor-like serine/threonine-protein kinase At4g03230 of Arabidopsis thaliana (Mouse-ear cress).